The primary structure comprises 401 residues: MGETEIEKVSDTTFVLQMGPHHPATHGVLKLLCEFEGERVINIKPDVGYLHRGVEKLSESKTYPGAMTLTDRLDYISSMTNNIGYCLAVERLMGIEPPPRAKFIRTMVSEMTRLSSHLLWLATHALDIGAMTVFLYAFREREQILQFFEKICGARLTVSYPRIGGVRVDIKEHVLDEIYKFMDLMLIRVDEYETLLTENRIWIARTRGVGVIAPEDAVLLGLTGPALRGSGVYYDIRKQIPYDAYSEIDFEVPLGEKGDTYDRYLCRIREMRQSVLIVKQCIEKMPEGKILSDKSPDIDLPHQAKRKIEPGDSLWNGFIAFSEEKQEIMPKGEIYSAIEAPKGELGFYIVSDGSGRPYRMRVRAPSFIHISAIPKLCEGHLLADVIAIIGTLDIVMGEADR.

It belongs to the complex I 49 kDa subunit family. NDH-1 is composed of 14 different subunits. Subunits NuoB, C, D, E, F, and G constitute the peripheral sector of the complex.

The protein resides in the cell inner membrane. It carries out the reaction a quinone + NADH + 5 H(+)(in) = a quinol + NAD(+) + 4 H(+)(out). NDH-1 shuttles electrons from NADH, via FMN and iron-sulfur (Fe-S) centers, to quinones in the respiratory chain. The immediate electron acceptor for the enzyme in this species is believed to be ubiquinone. Couples the redox reaction to proton translocation (for every two electrons transferred, four hydrogen ions are translocated across the cytoplasmic membrane), and thus conserves the redox energy in a proton gradient. In Thermodesulfovibrio yellowstonii (strain ATCC 51303 / DSM 11347 / YP87), this protein is NADH-quinone oxidoreductase subunit D 2.